The primary structure comprises 192 residues: ATP-dependent Clp protease proteolytic subunit 1 (192 aa).

Ser-92 (nucleophile) is an active-site residue. His-117 is an active-site residue.

This sequence belongs to the peptidase S14 family. In terms of assembly, fourteen ClpP subunits assemble into 2 heptameric rings which stack back to back to give a disk-like structure with a central cavity, resembling the structure of eukaryotic proteasomes.

The protein resides in the cytoplasm. The enzyme catalyses Hydrolysis of proteins to small peptides in the presence of ATP and magnesium. alpha-casein is the usual test substrate. In the absence of ATP, only oligopeptides shorter than five residues are hydrolyzed (such as succinyl-Leu-Tyr-|-NHMec, and Leu-Tyr-Leu-|-Tyr-Trp, in which cleavage of the -Tyr-|-Leu- and -Tyr-|-Trp bonds also occurs).. Functionally, cleaves peptides in various proteins in a process that requires ATP hydrolysis. Has a chymotrypsin-like activity. Plays a major role in the degradation of misfolded proteins. The sequence is that of ATP-dependent Clp protease proteolytic subunit 1 from Chlamydia trachomatis serovar D (strain ATCC VR-885 / DSM 19411 / UW-3/Cx).